A 301-amino-acid chain; its full sequence is 33 kDa chaperonin (301 aa).

2 disulfides stabilise this stretch: C240–C242 and C273–C276.

The protein belongs to the HSP33 family. In terms of processing, under oxidizing conditions two disulfide bonds are formed involving the reactive cysteines. Under reducing conditions zinc is bound to the reactive cysteines and the protein is inactive.

It localises to the cytoplasm. Functionally, redox regulated molecular chaperone. Protects both thermally unfolding and oxidatively damaged proteins from irreversible aggregation. Plays an important role in the bacterial defense system toward oxidative stress. This is 33 kDa chaperonin from Rippkaea orientalis (strain PCC 8801 / RF-1) (Cyanothece sp. (strain PCC 8801)).